The chain runs to 170 residues: Lipoprotein signal peptidase (170 aa).

Transmembrane regions (helical) follow at residues 9 to 29, 72 to 92, and 93 to 113; these read IGSV…KYLV, LFFL…ILKE, and TNKI…GNII. Catalysis depends on residues D124 and D146. The helical transmembrane segment at 142-162 threads the bilayer; the sequence is FNFADSYVVIGITLFIIYDLF.

The protein belongs to the peptidase A8 family.

Its subcellular location is the cell inner membrane. It catalyses the reaction Release of signal peptides from bacterial membrane prolipoproteins. Hydrolyzes -Xaa-Yaa-Zaa-|-(S,diacylglyceryl)Cys-, in which Xaa is hydrophobic (preferably Leu), and Yaa (Ala or Ser) and Zaa (Gly or Ala) have small, neutral side chains.. It functions in the pathway protein modification; lipoprotein biosynthesis (signal peptide cleavage). In terms of biological role, this protein specifically catalyzes the removal of signal peptides from prolipoproteins. This chain is Lipoprotein signal peptidase, found in Borrelia hermsii (strain HS1 / DAH).